We begin with the raw amino-acid sequence, 577 residues long: Outer spore wall assembly protein SHE10 (577 aa).

Positions 1–23 (MGKLIKLITTLTVLVSLLQYCCE) are cleaved as a signal peptide. Coiled coils occupy residues 379-416 (NETRSTLDELTNAMEKDLSEITDEIEKKVNAIREENVE) and 513-561 (ILRS…EEDV). Basic and acidic residues predominate over residues 525–545 (RERKERERKEREKAAAEEFQR). Positions 525-577 (RERKERERKEREKAAAEEFQRQQELLRQQEEEDEEDVSYTSTSTITTTTTMTL) are disordered. Low complexity predominate over residues 562 to 577 (SYTSTSTITTTTTMTL).

The protein belongs to the SHE10 family. Component of the mitochondria-localized RNase mitochondrial RNA-processing (RNase MRP) composed of one single RNA encoded by the NME1 gene and at least 31 proteins. Absent in the nucleus-localized RNase MRP (NuMRP).

The protein localises to the mitochondrion. Involved in spore wall assembly. May be a component of the mitochondrial RNase MRP (MtMRP), a ribonucleoprotein endoribonuclease involved in the cleaving RNA transcripts to generate primers for DNA replication in mitochondria. This chain is Outer spore wall assembly protein SHE10, found in Saccharomyces cerevisiae (strain YJM789) (Baker's yeast).